The following is a 297-amino-acid chain: Probable endonuclease 4 (297 aa).

Zn(2+) contacts are provided by H69, H110, E145, D179, H182, H214, D227, H229, and E259.

This sequence belongs to the AP endonuclease 2 family. Requires Zn(2+) as cofactor.

The catalysed reaction is Endonucleolytic cleavage to 5'-phosphooligonucleotide end-products.. Functionally, endonuclease IV plays a role in DNA repair. It cleaves phosphodiester bonds at apurinic or apyrimidinic (AP) sites, generating a 3'-hydroxyl group and a 5'-terminal sugar phosphate. The polypeptide is Probable endonuclease 4 (Listeria innocua serovar 6a (strain ATCC BAA-680 / CLIP 11262)).